A 437-amino-acid chain; its full sequence is Probable N-acetylmuramidase (437 aa).

Residues 1–57 (MPVSRVKVKNRHLKKKTKKPLAFYKPTTKFVGAVLIAGTLTTTHELLLQQTSPMVQA) form the signal peptide. Disordered regions lie at residues 217–244 (SSAG…SSTT), 291–319 (SSTN…ASQT), and 367–392 (ATSN…NSNA). Positions 243–286 (TTYTVKSGDTLWGISQRYGISVAQIQSANNLKSTIIYIGQKLLL) constitute a LysM 1 domain. The span at 291-317 (SSTNSGGSNNSASTTPTTSVTPAKPAS) shows a compositional bias: low complexity. Residues 319 to 362 (TSVKVKSGDTLWALSVKYKTSIAQLKSWNHLSSDTIYIGQNLIV) enclose the LysM 2 domain. The LysM 3 domain maps to 393–436 (SIHKVVKGDTLWGLSQKSGSPIASIKAWNHLSSDTILIGQYLRI).

The protein belongs to the glycosyl hydrolase 73 family.

The protein resides in the secreted. The catalysed reaction is Hydrolysis of (1-&gt;4)-beta-linkages between N-acetylmuramic acid and N-acetyl-D-glucosamine residues in a peptidoglycan and between N-acetyl-D-glucosamine residues in chitodextrins.. In terms of biological role, hydrolyzes the cell wall of L.lactis and M.lysodeikticus. Required for cell separation during growth. This chain is Probable N-acetylmuramidase (acmA), found in Lactococcus lactis subsp. cremoris (Streptococcus cremoris).